A 193-amino-acid chain; its full sequence is MIEKFLELGVVKFGIFRLSSGLESPFYIDLRNVLGEPELLRWVIEQYREILLRLKFDIIVGVATGGIPYASILGYTLGKPISYVRPEAKEHGTGRLIEGAEVSGREVVVIDDVLTTGKSIIGAINAIRSAGGIVAGAVVFLDREQCGSRNIKTATGVEVYSVYKMRGLLDRLKDYIDEEQYRSVINYLAQWRC.

Residues Arg85, Lys89, His91, and 111 to 119 each bind 5-phospho-alpha-D-ribose 1-diphosphate; that span reads DDVLTTGKS. Orotate-binding residues include Thr115 and Arg143.

The protein belongs to the purine/pyrimidine phosphoribosyltransferase family. PyrE subfamily. In terms of assembly, homodimer. Mg(2+) is required as a cofactor.

The enzyme catalyses orotidine 5'-phosphate + diphosphate = orotate + 5-phospho-alpha-D-ribose 1-diphosphate. It participates in pyrimidine metabolism; UMP biosynthesis via de novo pathway; UMP from orotate: step 1/2. Its function is as follows. Catalyzes the transfer of a ribosyl phosphate group from 5-phosphoribose 1-diphosphate to orotate, leading to the formation of orotidine monophosphate (OMP). In Pyrobaculum islandicum (strain DSM 4184 / JCM 9189 / GEO3), this protein is Orotate phosphoribosyltransferase.